The sequence spans 874 residues: MYQTTAELRSAFLEFFRSHGHQVVDSSSLVPGNDPTLLFTNAGMNQFKDVFLGMDKRNYTRATTAQRCVRAGGKHNDLDNVGYTARHHTFFEMLGNFSFGDYFKEEAICFGWSFLTETLKLPKERLCVTIYQTDDEAFEIWNKKIGVAAENIIRIGDNKGAPYASDNFWQMGDTGPCGPCTEIFYDHGDHIWGGRPGSPEEDGDRFIEIWNIVFMQYNRHISGEMLPLPKPSVDTGMGIERIAAIMQGVHSNYEIDIFRALIAKAAEIIGVTDLSNKSLRVIADHIRSCAFLVADGVMPSNEGRGYVLRRIIRRAVRHGNKLGATEAFFYKLVPTLIDVMGDAAKGLAETQVIVEKALKAEEEQFARTLERGLGILDAALSELTGDTLDGETVFKLYDTYGFPMDLTADVCRERNIIVDEAGFEAAMAEQRSRAQAAGNFGADYNAALKIDAETAFCGYTELVGQAKVTAIYQNGESVTAIKAGDEAVLVLDVTPFYAESGGQVGDKGQLVANGIEFTVNDTQKYGQATGHQGVLVAGSLSIGQMVEAKVDKKLRHRTQLNHSVTHLLHAALRQVLGTHVTQKGSLVDPERLRFDFSHFEAVKPAELKKVEELVNTQIRRNHELKVAEMAIDEAKEKGAMALFGEKYDAQVRVVTMGDFSIELCGGTHVGRTGDIGLFKITSEGGIAAGVRRIEAVTGAAAMAYVAQQQAELEEAAALLKGDTHSVVAKLKAQLDKMKQLEKDMAQLKDKLAAAASADLVGDAVVVNGVNVLIKKLDGVEAGSLRGLQDELKQKLKSAIIVLGTAQEGKVNLIAGVSNDLVGKVKAGELVAMVAAQVGGKGGGRPDMAQAGGSQPENLDAALAQVLPWITERLA.

Zn(2+) is bound by residues His562, His566, Cys664, and His668.

It belongs to the class-II aminoacyl-tRNA synthetase family. The cofactor is Zn(2+).

The protein localises to the cytoplasm. The enzyme catalyses tRNA(Ala) + L-alanine + ATP = L-alanyl-tRNA(Ala) + AMP + diphosphate. Its function is as follows. Catalyzes the attachment of alanine to tRNA(Ala) in a two-step reaction: alanine is first activated by ATP to form Ala-AMP and then transferred to the acceptor end of tRNA(Ala). Also edits incorrectly charged Ser-tRNA(Ala) and Gly-tRNA(Ala) via its editing domain. This is Alanine--tRNA ligase from Shewanella putrefaciens (strain CN-32 / ATCC BAA-453).